The primary structure comprises 880 residues: DNA mismatch repair protein MutS (880 aa).

624 to 631 (GPNMAGKS) lines the ATP pocket.

The protein belongs to the DNA mismatch repair MutS family.

Its function is as follows. This protein is involved in the repair of mismatches in DNA. It is possible that it carries out the mismatch recognition step. This protein has a weak ATPase activity. The protein is DNA mismatch repair protein MutS of Alkaliphilus metalliredigens (strain QYMF).